We begin with the raw amino-acid sequence, 369 residues long: Anhydro-N-acetylmuramic acid kinase (369 aa).

An ATP-binding site is contributed by 12–19; sequence GTSLDGVD.

This sequence belongs to the anhydro-N-acetylmuramic acid kinase family.

The enzyme catalyses 1,6-anhydro-N-acetyl-beta-muramate + ATP + H2O = N-acetyl-D-muramate 6-phosphate + ADP + H(+). It functions in the pathway amino-sugar metabolism; 1,6-anhydro-N-acetylmuramate degradation. The protein operates within cell wall biogenesis; peptidoglycan recycling. In terms of biological role, catalyzes the specific phosphorylation of 1,6-anhydro-N-acetylmuramic acid (anhMurNAc) with the simultaneous cleavage of the 1,6-anhydro ring, generating MurNAc-6-P. Is required for the utilization of anhMurNAc either imported from the medium or derived from its own cell wall murein, and thus plays a role in cell wall recycling. This Escherichia coli O1:K1 / APEC protein is Anhydro-N-acetylmuramic acid kinase.